Consider the following 668-residue polypeptide: Potassium-transporting ATPase ATP-binding subunit (668 aa).

4 consecutive transmembrane segments (helical) span residues 31 to 51 (MFLT…PSFF), 62 to 82 (FYVA…ISTA), 213 to 233 (TVFL…IFAI), and 243 to 263 (IVML…ALLP). Catalysis depends on Asp298, which acts as the 4-aspartylphosphate intermediate. ATP contacts are provided by residues Asp335, Glu339, 367–374 (FSSETKFS), and Lys385. 2 residues coordinate Mg(2+): Asp504 and Asp508. 3 helical membrane-spanning segments follow: residues 573 to 593 (YFVI…VNIL), 599 to 619 (IVAV…LIPL), and 644 to 664 (IGGV…LIAW).

Belongs to the cation transport ATPase (P-type) (TC 3.A.3) family. Type IA subfamily. The system is composed of three essential subunits: KdpA, KdpB and KdpC.

The protein resides in the cell membrane. It carries out the reaction K(+)(out) + ATP + H2O = K(+)(in) + ADP + phosphate + H(+). Its function is as follows. Part of the high-affinity ATP-driven potassium transport (or Kdp) system, which catalyzes the hydrolysis of ATP coupled with the electrogenic transport of potassium into the cytoplasm. This subunit is responsible for energy coupling to the transport system and for the release of the potassium ions to the cytoplasm. The chain is Potassium-transporting ATPase ATP-binding subunit from Thermoplasma volcanium (strain ATCC 51530 / DSM 4299 / JCM 9571 / NBRC 15438 / GSS1).